We begin with the raw amino-acid sequence, 94 residues long: uncharacterized protein (94 aa).

Residues 13–33 form a helical membrane-spanning segment; that stretch reads IVICLTTIISVTIFYILVSFF.

It is found in the membrane. This is an uncharacterized protein from Dictyostelium discoideum (Social amoeba).